Consider the following 817-residue polypeptide: DNA mismatch repair protein MutS (817 aa).

Position 604–611 (604–611) interacts with ATP; the sequence is GPNMSGKS.

The protein belongs to the DNA mismatch repair MutS family.

Functionally, this protein is involved in the repair of mismatches in DNA. It is possible that it carries out the mismatch recognition step. This protein has a weak ATPase activity. This chain is DNA mismatch repair protein MutS, found in Petrotoga mobilis (strain DSM 10674 / SJ95).